Consider the following 81-residue polypeptide: UPF0386 protein Smed_0945 (81 aa).

This sequence belongs to the UPF0386 family.

This chain is UPF0386 protein Smed_0945, found in Sinorhizobium medicae (strain WSM419) (Ensifer medicae).